The sequence spans 1298 residues: DNA repair protein rad-50 (1298 aa).

ATP is bound by residues R13, N38, G39, G41, K42, T43, T44, I66, and Q158. T43 serves as a coordination point for Mg(2+). Q158 contributes to the Mg(2+) binding site. Coiled-coil stretches lie at residues 222–291 (ARQN…IRVE), 317–598 (EERA…QYRK), and 622–660 (AEEVSEKLENLRKRLKKARKDLAPLSAKSNLYDSYIEES). One can recognise a Zinc-hook domain in the interval 622 to 719 (AEEVSEKLEN…EEIIIVKAEG (98 aa)). Residues C666 and C669 each contribute to the Zn(2+) site. Coiled coils occupy residues 691-719 (LSFPTEQEELEKLVSKLEKEEIIIVKAEG) and 754-1092 (KNEK…KESI).

Belongs to the SMC family. RAD50 subfamily. In terms of assembly, component of the MRN complex composed of two heterodimers rad-50 and mre-11 associated with a single nbs-1. It depends on Zn(2+) as a cofactor.

The protein localises to the nucleus. It localises to the chromosome. The enzyme catalyses ATP + H2O = ADP + phosphate + H(+). Its function is as follows. Component of the MRN complex, which plays a central role in double-strand break (DSB) repair, DNA recombination, maintenance of telomere integrity and meiosis. The MRN complex is involved in the repair of DNA double-strand breaks (DSBs) via homologous recombination (HR), an error-free mechanism which primarily occurs during S and G2 phases. The complex (1) mediates the end resection of damaged DNA, which generates proper single-stranded DNA, a key initial steps in HR, and is (2) required for the recruitment of other repair factors and efficient activation of ATM and ATR upon DNA damage. The MRN complex possesses single-strand endonuclease activity and double-strand-specific 3'-5' exonuclease activity, which are provided by mre-11, to initiate end resection, which is required for single-strand invasion and recombination. Within the complex, rad-50 is both required to bind DNA ends and hold them in close proximity and regulate the activity of mre-11. Rad-50 provides an ATP-dependent control of mre-11 by positioning DNA ends into the mre-11 active site: ATP-binding induces a large structural change from an open form with accessible mre-11 nuclease sites into a closed form. This is DNA repair protein rad-50 (rad-50) from Caenorhabditis elegans.